Here is a 505-residue protein sequence, read N- to C-terminus: Cyclic AMP-dependent transcription factor ATF-2 (505 aa).

The short motif at 1-7 is the Nuclear export signal 1 (N-NES) element; it reads MKFKLHV. A C2H2-type zinc finger spans residues 25-49; sequence FLCTAPGCGQRFTNEDHLAVHKHKH. Residue T52 is modified to Phosphothreonine; by PKC/PRKCH. At S62 the chain carries Phosphoserine; by VRK1. Residue T69 is modified to Phosphothreonine; by MAPK11 and MAPK14. T71 is subject to Phosphothreonine; by MAPK1, MAPK3, MAPK11, MAPK12, MAPK14 and PLK3. T73 is modified (phosphothreonine; by VRK1). Phosphoserine occurs at positions 90 and 112. T116 is modified (phosphothreonine). Position 121 is a phosphoserine; by PKC/PRKCA and PKC/PRKCB (S121). 2 disordered regions span residues 125-155 and 259-373; these read EPSV…PLAQ and PGIP…RQKR. Residue S136 is modified to Phosphoserine. The segment covering 282 to 293 has biased composition (polar residues); sequence LTQQHPPVTNGD. The interval 296–299 is essential for its histone acetyltransferase activity; it reads KGHG. The segment covering 318–334 has biased composition (low complexity); sequence PATSTTETPASPAHTTP. S328 carries the phosphoserine modification. A Phosphoserine; by PKC/PRKCA and PKC/PRKCB modification is found at S340. Basic and acidic residues predominate over residues 346-363; the sequence is AANEDPDEKRRKFLERNR. Residues 352–415 form the bZIP domain; it reads DEKRRKFLER…AQLKQLLLAH (64 aa). Positions 354 to 374 are basic motif; that stretch reads KRRKFLERNRAAASRCRQKRK. At K357 the chain carries N6-acetyllysine. Position 367 is a phosphoserine; by PKC/PRKCA and PKC/PRKCB (S367). The residue at position 374 (K374) is an N6-acetyllysine. The segment at 380 to 408 is leucine-zipper; sequence LEKKAEDLSSLNGQLQSEVTLLRNEVAQL. The Nuclear export signal 2 (C-NES) signature appears at 405 to 414; the sequence is VAQLKQLLLA. Positions 425 to 472 are disordered; the sequence is KKSGYHTADKDDSSEDISVPSSPHTEAIQHSSVSTSNGVSSTSKAEAV. Residues S442 and S446 each carry the phosphoserine modification. Positions 443 to 454 are enriched in polar residues; that stretch reads VPSSPHTEAIQH. Low complexity predominate over residues 455 to 467; it reads SSVSTSNGVSSTS. S490 and S498 each carry phosphoserine; by ATM.

Belongs to the bZIP family. ATF subfamily. As to quaternary structure, binds DNA as a dimer and can form a homodimer in the absence of DNA. Can form a heterodimer with JUN. Heterodimerization is essential for its transcriptional activity. Interacts with SMAD3 and SMAD4. Binds through its N-terminal region to UTF1 which acts as a coactivator of ATF2 transcriptional activity. Interacts with the HK1/VDAC1 complex. Interacts with NBN, MRE11, XPO1, KAT5 and CUL3. Phosphorylation of Thr-69 by MAPK14 and MAPK11, and at Thr-71 by MAPK1/ERK2, MAPK3/ERK1, MAPK11, MAPK12 and MAPK14 in response to external stimulus like insulin causes increased transcriptional activity. Phosphorylated by PLK3 following hyperosmotic stress. Also phosphorylated and activated by JNK and CaMK4. ATM-mediated phosphorylation at Ser-490 and Ser-498 stimulates its function in DNA damage response. Phosphorylation at Ser-62, Thr-73 and Ser-121 activates its transcriptional activity. Phosphorylation at Thr-69 or Thr-71 enhances acetylation of histones H2B and H4. Ubiquitously expressed, with more abundant expression in the brain.

The protein localises to the nucleus. It localises to the cytoplasm. Its subcellular location is the mitochondrion outer membrane. Transcriptional activator which regulates the transcription of various genes, including those involved in anti-apoptosis, cell growth, and DNA damage response. Dependent on its binding partner, binds to CRE (cAMP response element) consensus sequences (5'-TGACGTCA-3') or to AP-1 (activator protein 1) consensus sequences (5'-TGACTCA-3'). In the nucleus, contributes to global transcription and the DNA damage response, in addition to specific transcriptional activities that are related to cell development, proliferation and death. In the cytoplasm, interacts with and perturbs HK1- and VDAC1-containing complexes at the mitochondrial outer membrane, thereby impairing mitochondrial membrane potential, inducing mitochondrial leakage and promoting cell death. The phosphorylated form (mediated by ATM) plays a role in the DNA damage response and is involved in the ionizing radiation (IR)-induced S phase checkpoint control and in the recruitment of the MRN complex into the IR-induced foci (IRIF). Exhibits histone acetyltransferase (HAT) activity which specifically acetylates histones H2B and H4 in vitro. In concert with CUL3 and RBX1, promotes the degradation of KAT5 thereby attenuating its ability to acetylate and activate ATM. Can elicit oncogenic or tumor suppressor activities depending on the tissue or cell type. This is Cyclic AMP-dependent transcription factor ATF-2 (ATF2) from Homo sapiens (Human).